The primary structure comprises 442 residues: Enolase 1 (442 aa).

The segment at 73–140 (KLIAKEIVGY…YNYLGGFNAH (68 aa)) is binds human collagen. Gln163 is a (2R)-2-phosphoglycerate binding site. Glu205 serves as the catalytic Proton donor. Asp242, Glu290, and Asp317 together coordinate Mg(2+). The (2R)-2-phosphoglycerate site is built by Lys342, Arg371, Ser372, and Lys393. Lys342 serves as the catalytic Proton acceptor.

The protein belongs to the enolase family. It depends on Mg(2+) as a cofactor.

The protein localises to the cytoplasm. Its subcellular location is the secreted. It is found in the cell surface. The enzyme catalyses (2R)-2-phosphoglycerate = phosphoenolpyruvate + H2O. The protein operates within carbohydrate degradation; glycolysis; pyruvate from D-glyceraldehyde 3-phosphate: step 4/5. In terms of biological role, catalyzes the reversible conversion of 2-phosphoglycerate (2-PG) into phosphoenolpyruvate (PEP). It is essential for the degradation of carbohydrates via glycolysis. Its function is as follows. 'Moonlights' as a collagen receptor. Binds host (human) collagen, which may contribute to pathogenicity. This Lactiplantibacillus plantarum (strain ATCC BAA-793 / NCIMB 8826 / WCFS1) (Lactobacillus plantarum) protein is Enolase 1.